The chain runs to 206 residues: Small ribosomal subunit protein eS1 (206 aa).

Belongs to the eukaryotic ribosomal protein eS1 family.

The chain is Small ribosomal subunit protein eS1 from Halobacterium salinarum (strain ATCC 29341 / DSM 671 / R1).